The chain runs to 152 residues: 6,7-dimethyl-8-ribityllumazine synthase (152 aa).

5-amino-6-(D-ribitylamino)uracil is bound by residues phenylalanine 21, 55-57, and 79-81; these read AFE and CVI. 84–85 is a binding site for (2S)-2-hydroxy-3-oxobutyl phosphate; sequence AT. Residue histidine 87 is the Proton donor of the active site. Phenylalanine 112 is a 5-amino-6-(D-ribitylamino)uracil binding site. Position 126 (arginine 126) interacts with (2S)-2-hydroxy-3-oxobutyl phosphate.

Belongs to the DMRL synthase family. In terms of assembly, forms an icosahedral capsid composed of 60 subunits, arranged as a dodecamer of pentamers.

The catalysed reaction is (2S)-2-hydroxy-3-oxobutyl phosphate + 5-amino-6-(D-ribitylamino)uracil = 6,7-dimethyl-8-(1-D-ribityl)lumazine + phosphate + 2 H2O + H(+). It participates in cofactor biosynthesis; riboflavin biosynthesis; riboflavin from 2-hydroxy-3-oxobutyl phosphate and 5-amino-6-(D-ribitylamino)uracil: step 1/2. Functionally, catalyzes the formation of 6,7-dimethyl-8-ribityllumazine by condensation of 5-amino-6-(D-ribitylamino)uracil with 3,4-dihydroxy-2-butanone 4-phosphate. This is the penultimate step in the biosynthesis of riboflavin. The protein is 6,7-dimethyl-8-ribityllumazine synthase of Staphylococcus haemolyticus (strain JCSC1435).